Consider the following 567-residue polypeptide: Type 2 DNA topoisomerase 6 subunit B (567 aa).

ATP-binding positions include Asn46, Asp78, 99–100 (TK), 109–116 (GQQGIGIS), and Lys472.

Belongs to the TOP6B family. As to quaternary structure, homodimer. Heterotetramer of two Top6A and two Top6B chains.

The catalysed reaction is ATP-dependent breakage, passage and rejoining of double-stranded DNA.. Its function is as follows. Relaxes both positive and negative superturns and exhibits a strong decatenase activity. The polypeptide is Type 2 DNA topoisomerase 6 subunit B (Thermococcus kodakarensis (strain ATCC BAA-918 / JCM 12380 / KOD1) (Pyrococcus kodakaraensis (strain KOD1))).